Here is a 201-residue protein sequence, read N- to C-terminus: Recombination protein RecR (201 aa).

The C4-type zinc finger occupies 57-72 (CKYCSNFGNKDECDIC). Positions 80–176 (TKLMIVTTNE…QIYRIGFGIP (97 aa)) constitute a Toprim domain.

The protein belongs to the RecR family.

Its function is as follows. May play a role in DNA repair. It seems to be involved in an RecBC-independent recombinational process of DNA repair. It may act with RecF and RecO. The chain is Recombination protein RecR from Ureaplasma urealyticum serovar 10 (strain ATCC 33699 / Western).